A 95-amino-acid polypeptide reads, in one-letter code: Aspartyl/glutamyl-tRNA(Asn/Gln) amidotransferase subunit C (95 aa).

This sequence belongs to the GatC family. Heterotrimer of A, B and C subunits.

It carries out the reaction L-glutamyl-tRNA(Gln) + L-glutamine + ATP + H2O = L-glutaminyl-tRNA(Gln) + L-glutamate + ADP + phosphate + H(+). It catalyses the reaction L-aspartyl-tRNA(Asn) + L-glutamine + ATP + H2O = L-asparaginyl-tRNA(Asn) + L-glutamate + ADP + phosphate + 2 H(+). In terms of biological role, allows the formation of correctly charged Asn-tRNA(Asn) or Gln-tRNA(Gln) through the transamidation of misacylated Asp-tRNA(Asn) or Glu-tRNA(Gln) in organisms which lack either or both of asparaginyl-tRNA or glutaminyl-tRNA synthetases. The reaction takes place in the presence of glutamine and ATP through an activated phospho-Asp-tRNA(Asn) or phospho-Glu-tRNA(Gln). This Caulobacter sp. (strain K31) protein is Aspartyl/glutamyl-tRNA(Asn/Gln) amidotransferase subunit C.